The following is a 344-amino-acid chain: Methionine import ATP-binding protein MetN 1 (344 aa).

Residues 2 to 241 (IEIRNLSQRF…PHHEVTRALI (240 aa)) form the ABC transporter domain. 38-45 (GRSGAGKS) provides a ligand contact to ATP.

This sequence belongs to the ABC transporter superfamily. Methionine importer (TC 3.A.1.24) family. The complex is composed of two ATP-binding proteins (MetN), two transmembrane proteins (MetI) and a solute-binding protein (MetQ).

The protein localises to the cell inner membrane. It carries out the reaction L-methionine(out) + ATP + H2O = L-methionine(in) + ADP + phosphate + H(+). The enzyme catalyses D-methionine(out) + ATP + H2O = D-methionine(in) + ADP + phosphate + H(+). Functionally, part of the ABC transporter complex MetNIQ involved in methionine import. Responsible for energy coupling to the transport system. The protein is Methionine import ATP-binding protein MetN 1 of Burkholderia mallei (strain ATCC 23344).